Here is a 301-residue protein sequence, read N- to C-terminus: Porphobilinogen deaminase (301 aa).

C240 is subject to S-(dipyrrolylmethanemethyl)cysteine.

This sequence belongs to the HMBS family. As to quaternary structure, monomer. Requires dipyrromethane as cofactor.

The catalysed reaction is 4 porphobilinogen + H2O = hydroxymethylbilane + 4 NH4(+). It functions in the pathway porphyrin-containing compound metabolism; protoporphyrin-IX biosynthesis; coproporphyrinogen-III from 5-aminolevulinate: step 2/4. Functionally, tetrapolymerization of the monopyrrole PBG into the hydroxymethylbilane pre-uroporphyrinogen in several discrete steps. This chain is Porphobilinogen deaminase, found in Clostridioides difficile (strain 630) (Peptoclostridium difficile).